A 39-amino-acid chain; its full sequence is RapF inhibitor (39 aa).

The propeptide occupies Met-1–Ala-34.

The protein belongs to the Phr family. In terms of assembly, interacts with RapF and inhibits its interaction with ComA. Contains a predicted signal peptide cleavage site in the N-terminal region, however the propeptide is probably subject to only one processing event, at the N-terminal end of the mature peptide.

The protein localises to the secreted. It localises to the cytoplasm. In terms of biological role, signaling molecule involved in the regulation of genetic competence development. Secreted during production, but the mature peptide acts intracellularly, indicating that it needs to be imported into the cell to function. Stimulates expression of the genes controlled by ComA, a transcriptional factor that regulates the development of genetic competence. Acts by inhibiting RapF, which regulates the activity of ComA. This is RapF inhibitor (phrF) from Bacillus subtilis (strain 168).